Here is a 285-residue protein sequence, read N- to C-terminus: MPAATVDLSQRICEVWACNLDDQMKRIRQVIRKYNYVAMDTEFPGVVARPIGEFRSNADYQYQLLRCNVDLLKIIQLGLTFVNEQGEYPPGTSTWQFNFKFNLTEDMYAQDSIELLTSSGIQFKKHEEEGIETQYFAELFMTSGVVLCEGVKWLSFHSGYDFGYLIKILTNSNLPEVELDFFEILRLFFPVIYDVKYLMKSCKNLKGGLQEVAEQLELKRIGPQHQAGSDSLLTGMAFFKMREMFFEDHIDDAKYCGHLYGLGSGSSYVQNGTGNAYEEEANKQS.

Positions 40, 42, 161, 230, and 278 each coordinate a divalent metal cation.

It belongs to the CAF1 family. As to quaternary structure, component of the CCR4-NOT complex. Mn(2+) is required as a cofactor. Mg(2+) serves as cofactor. Requires Co(2+) as cofactor.

It is found in the nucleus. Its subcellular location is the cytoplasm. The enzyme catalyses Exonucleolytic cleavage of poly(A) to 5'-AMP.. Has 3'-5' poly(A) exoribonuclease activity for synthetic poly(A) RNA substrate. Catalytic component of the CCR4-NOT complex which is one of the major cellular mRNA deadenylases and is linked to various cellular processes including bulk mRNA degradation, miRNA-mediated repression, translational repression during translational initiation and general transcription regulation. During miRNA-mediated repression the complex also seems to act as translational repressor during translational initiation. Additional complex functions may be a consequence of its influence on mRNA expression. This chain is CCR4-NOT transcription complex subunit 7 (cnot7), found in Xenopus tropicalis (Western clawed frog).